Reading from the N-terminus, the 191-residue chain is HTH-type transcriptional regulator YjdC (191 aa).

The region spanning 1–60 (MQREDVLGEALKLLELQGIANTTLEMVAERVDYPLDELRRFWPDKEAILYDALRYLSQQI) is the HTH tetR-type domain.

This chain is HTH-type transcriptional regulator YjdC (yjdC), found in Escherichia coli (strain K12).